Reading from the N-terminus, the 141-residue chain is uncharacterized protein (141 aa).

This is an uncharacterized protein from Clostridium pasteurianum.